Consider the following 875-residue polypeptide: Alanine--tRNA ligase (875 aa).

Histidine 564, histidine 568, cysteine 666, and histidine 670 together coordinate Zn(2+).

It belongs to the class-II aminoacyl-tRNA synthetase family. In terms of assembly, homotetramer. Requires Zn(2+) as cofactor.

The protein resides in the cytoplasm. It catalyses the reaction tRNA(Ala) + L-alanine + ATP = L-alanyl-tRNA(Ala) + AMP + diphosphate. Its function is as follows. Catalyzes the attachment of alanine to tRNA(Ala) in a two-step reaction: alanine is first activated by ATP to form Ala-AMP and then transferred to the acceptor end of tRNA(Ala). Also edits incorrectly charged Ser-tRNA(Ala) and Gly-tRNA(Ala) via its editing domain. The sequence is that of Alanine--tRNA ligase from Serratia proteamaculans (strain 568).